The sequence spans 158 residues: Ribosome maturation factor RimP (158 aa).

It belongs to the RimP family.

It is found in the cytoplasm. In terms of biological role, required for maturation of 30S ribosomal subunits. In Deinococcus radiodurans (strain ATCC 13939 / DSM 20539 / JCM 16871 / CCUG 27074 / LMG 4051 / NBRC 15346 / NCIMB 9279 / VKM B-1422 / R1), this protein is Ribosome maturation factor RimP.